Consider the following 144-residue polypeptide: Large ribosomal subunit protein uL16 (144 aa).

The protein belongs to the universal ribosomal protein uL16 family. As to quaternary structure, part of the 50S ribosomal subunit.

Functionally, binds 23S rRNA and is also seen to make contacts with the A and possibly P site tRNAs. The sequence is that of Large ribosomal subunit protein uL16 from Acidobacterium capsulatum (strain ATCC 51196 / DSM 11244 / BCRC 80197 / JCM 7670 / NBRC 15755 / NCIMB 13165 / 161).